We begin with the raw amino-acid sequence, 159 residues long: Urease subunit beta 2 (159 aa).

The tract at residues 1–24 (MAKEPTKAAHPQPEQTKTNHKAHR) is disordered.

This sequence belongs to the urease beta subunit family. As to quaternary structure, heterotrimer of UreA (gamma), UreB (beta) and UreC (alpha) subunits. Three heterotrimers associate to form the active enzyme.

Its subcellular location is the cytoplasm. The catalysed reaction is urea + 2 H2O + H(+) = hydrogencarbonate + 2 NH4(+). It participates in nitrogen metabolism; urea degradation; CO(2) and NH(3) from urea (urease route): step 1/1. Functionally, disrupting the ure2 operon has no effect on urease activity, or pathogen survival in BALB/c mice when inoculated by gavage, but confers slightly enhanced resistance to low pH killing in vitro. The chain is Urease subunit beta 2 from Brucella suis biovar 1 (strain 1330).